The primary structure comprises 641 residues: Probable potassium transport system protein Kup 4 (641 aa).

12 helical membrane-spanning segments follow: residues 31–51 (AALG…LYTL), 64–84 (TASA…TISI), 119–139 (ILAV…VITP), 155–175 (GSLK…FFAA), 183–203 (IGAA…VLGL), 221–241 (AIGF…GVFL), 265–285 (WYAI…ALLI), 298–318 (LCPT…TIIA), 355–375 (IYVP…TIAF), 381–401 (LAGA…CLLF), 412–432 (LAVS…FFGA), and 437–457 (IAEG…LMLT).

The protein belongs to the HAK/KUP transporter (TC 2.A.72) family.

Its subcellular location is the cell inner membrane. The catalysed reaction is K(+)(in) + H(+)(in) = K(+)(out) + H(+)(out). In terms of biological role, transport of potassium into the cell. Likely operates as a K(+):H(+) symporter. The chain is Probable potassium transport system protein Kup 4 from Bradyrhizobium sp. (strain BTAi1 / ATCC BAA-1182).